Here is a 142-residue protein sequence, read N- to C-terminus: Hemoglobin subunit alpha (142 aa).

The residue at position 1 (S1) is an N-acetylserine. One can recognise a Globin domain in the interval 1–142; that stretch reads SLSDKDKAAV…VALALAERYR (142 aa). H59 lines the O2 pocket. H88 contacts heme b.

Belongs to the globin family. In terms of assembly, hb1 is a heterotetramer of two alpha chains and two beta-1 chains, while Hb2 is a heterotetramer of two alpha chains and two beta-2 chains. In terms of tissue distribution, red blood cells.

Its function is as follows. Involved in oxygen transport from gills to the various peripheral tissues. The protein is Hemoglobin subunit alpha (hba) of Cygnodraco mawsoni (Antarctic dragonfish).